The sequence spans 275 residues: 2,3,4,5-tetrahydropyridine-2,6-dicarboxylate N-succinyltransferase (275 aa).

Substrate is bound by residues Arg108 and Asp145.

This sequence belongs to the transferase hexapeptide repeat family. Homotrimer.

The protein resides in the cytoplasm. The catalysed reaction is (S)-2,3,4,5-tetrahydrodipicolinate + succinyl-CoA + H2O = (S)-2-succinylamino-6-oxoheptanedioate + CoA. It participates in amino-acid biosynthesis; L-lysine biosynthesis via DAP pathway; LL-2,6-diaminopimelate from (S)-tetrahydrodipicolinate (succinylase route): step 1/3. The chain is 2,3,4,5-tetrahydropyridine-2,6-dicarboxylate N-succinyltransferase from Ruegeria pomeroyi (strain ATCC 700808 / DSM 15171 / DSS-3) (Silicibacter pomeroyi).